The following is a 688-amino-acid chain: DNA ligase (688 aa).

Residues 38 to 42, 87 to 88, and E118 each bind NAD(+); these read DEEYD and SL. The active-site N6-AMP-lysine intermediate is the K120. NAD(+) contacts are provided by R141, E175, K291, and K315. Positions 409, 412, 428, and 433 each coordinate Zn(2+). The BRCT domain maps to 590-679; sequence VKLDILRGLT…AELKGYNFDE (90 aa).

The protein belongs to the NAD-dependent DNA ligase family. LigA subfamily. The cofactor is Mg(2+). Mn(2+) serves as cofactor.

The enzyme catalyses NAD(+) + (deoxyribonucleotide)n-3'-hydroxyl + 5'-phospho-(deoxyribonucleotide)m = (deoxyribonucleotide)n+m + AMP + beta-nicotinamide D-nucleotide.. In terms of biological role, DNA ligase that catalyzes the formation of phosphodiester linkages between 5'-phosphoryl and 3'-hydroxyl groups in double-stranded DNA using NAD as a coenzyme and as the energy source for the reaction. It is essential for DNA replication and repair of damaged DNA. The sequence is that of DNA ligase from Thermotoga maritima (strain ATCC 43589 / DSM 3109 / JCM 10099 / NBRC 100826 / MSB8).